The primary structure comprises 271 residues: Probable ribosomal RNA small subunit methyltransferase A (271 aa).

Leucine 12, glycine 37, glutamate 58, aspartate 83, and asparagine 100 together coordinate S-adenosyl-L-methionine.

The protein belongs to the class I-like SAM-binding methyltransferase superfamily. rRNA adenine N(6)-methyltransferase family. RsmA subfamily.

Its subcellular location is the cytoplasm. Functionally, specifically dimethylates two adjacent adenosines in the loop of a conserved hairpin near the 3'-end of 16S rRNA in the 30S particle. May play a critical role in biogenesis of 30S subunits. The polypeptide is Probable ribosomal RNA small subunit methyltransferase A (Methanococcus aeolicus (strain ATCC BAA-1280 / DSM 17508 / OCM 812 / Nankai-3)).